A 2415-amino-acid chain; its full sequence is MEGASTQPMPHSQRERQAPVHAISGTWENCDQAGEYKGTACCVVERQVYSTETHAVEGCCSTRWNGVKEEKGGGEVSSRTALAGVVHLYTNSDGNAYTHISDQGMRQDEAVAGQEQRHLNCEGEHEKKGNVAAGGGTLMVTKSEIEPCDDYYSVQRGQSCAGERAPRDGCCRLLDGSRVDPAEGGSEEDENCYTHVLQKHLGQMPTAPYQGDDRLQTDLRLGDFQSGPSDALSGHHVTRTPILSPHGRYSEYISERLAWQYAERPGHGIAAENTVVMHSHTGEATGSLRADAPSQWSTESRLQFHVGSQFTTENPELFAGIVGLDTEQFDARNAEALHWRQQGEARSTETECIADITPERGNRSTIRQWNKPEAARQEYHRASASARGPEETNIITRGAHSDDQSIDAAAPGCWAARHLTSRQHPNPRPRMKEEHCGREREVLSSEQPSDCGETQKTPASHSLVLDSKSRADASQTSPYTRNDEIQTIRAFEEQCLEVQLPQSRLRRGIDYEAGMSQLAPTTQELKAKVLTTGLSPSCPNAAVLRASVPLSMDTTVTVHLADVEDPSSKRHTPIENSISSGHCDPPCSSPGGMMEPRVSVSGLGSPHNCVEDREIARHGDGIGRDILERRPLPFSPAALLTGCSSTAASSVVSGDVFTSVAASARANACRSSTDTQEESGCGDAPRYVLLFPDEQDERLGHAQTSIATPSGSGQSKCMFKGDGNAEATFREEVKSSELRTPSRIQTRRLLPGVQLQGMDCDGCGASDPQKGRPAPETGFLPEICHFSPQHPWQPGSEVNQGYRAGADYGTSRVQQSLENCSWEESVDEGEQPRTTSSSSYGQDTQKRDSFLQSIDNRIASEPVDPTGTCGYNSTPETFRSGCIMRDQMLGVKPHLSHVSLTREGKHRGQQTHLRKTGVPTWSAEEDASLAELVSRKGFKWALISSQLTGAFGIPRTGKQCRERWFNHVNPEVKKGDWSAEEDAMILMLQNELGNRWATIAKKLRGRTENAVKNRFISLSNARLGYGRPKRDGSSADCFSNRRTGSGKSSGITGMPNLCQSVCSAGTTKKDSSESGNHFVMSVATKVFEFSDVAVDSGVSRPRQCTGTSPSCGHPSAGEGDPSHLKNTDVVGREQPIQRNNNESGKAAEQTAFSGVKTGTLSVSQDAVPVGRLVVASVGPQHIRRSFPTDETLPKFAAKEHNNQQLNDEREHLEQSNSTSEGSFLASAHEHADIARSDPDEDTLEPHQKRRRKRCAIAYQGEERGDSNGLDSIADRAEQAGNFQAMRKANTDNGKVDYLEPHRYEKLSPCEQVIQPSLRPACDHRGAPQNSVESGEQSPDAQRQLCNQGCRTSNRTVHSSVYSNEVESNELRGVFRLAEQSLPSQSGDPAWSTAGFQLSILPQKVEVHSRNKCDGQNVMYRCSPGSLPTTHQQTVFHYDRDSSRFPCAAKPAAASGAQGTIEENDGLVKEGPSMIVTGSSVEVVHCCSVSLRRRDRSLPSAQLWTSQETESDTNPSPNQQHESCHQYCKRHAAWCGKTDQFSKLTSSHQENSSGKDACLVSVSPTVTLDDLQKQSRGTVLSAKEEIGKPETWSHVVDNTYSKTDHQRASLCAENSSGCAEGSTELVRFSGGSVKSGSSMSVDCGNGNPDDCQDCKAEEIWRGEQRYAERGHSVESRGAGSVGRSTDLTITDSGSMPLCASPIGRPPADNDTLFLSDARCNVVAQLNHQDNSRISRLASCEEEFLACGGERLINASGGFKPDGGCLYRMQQAGACNTKLHRPVHSCSTIDSEQLEDLPSVEKAVGDRSFSSKRKGDIPPFAEWKKNDELRELYRGVSEAVSHGQPGDWNGSWPGISGRAHQTSSCFPDRVNASDRRELNSWRLHVSAAAELGSSHIWNSQSYASASVSRDKQREPPKNGLTGCDVPEYLGTSQSAGLPAANAHERGNFYGHDRCRPREGERVRWVGLQRNRKPEASVSSGASNSATTARPKDSTEPDEGNSEGVSTRRKDSGSTAATISRAVSLGMVTPSAACENSSSLTDTSPPLSHRPSFSFTHCCEETLSRCNSSNYLCPPATCHTSDDGRSLGPSREAQALRSLSLASGYGYPGIPAEATSFWQGSSLEHSIMEPQMVPSDDELRLWVHPRDAANWSQSTLKPVAVVSGTDAGDDQHKTPENLTPESGQAHRRDGHDMQRVQRCDDEGECPPTTVELTFPHSHSSDEMQDLPSKVQGNFLLRRELSDSLQHETAESVAGYGWMRIRNAGDIPNSKVPCAWEQCMPASERERGVNDHMSSEASRMSKAASSSFVPSSCTDAPVVRVGEDTTKSVCEEQQLCEGGNRGSLSPEATGFESLGPPLQLLLVDGYTPFEPVVEKVSQTMEQTLFPVPGQETDTRDEDGRYNCECLQNRQPPLHSGGLM.

3 disordered regions span residues 369-392 (WNKPEAARQEYHRASASARGPEET), 418-481 (HLTS…PYTR), and 761-845 (DGCG…QDTQ). The segment covering 419–429 (LTSRQHPNPRP) has biased composition (basic residues). The span at 430-443 (RMKEEHCGREREVL) shows a compositional bias: basic and acidic residues. Polar residues-rich tracts occupy residues 444–460 (SSEQPSDCGETQKTPAS) and 832–843 (PRTTSSSSYGQD). The Myb-like domain occupies 921–968 (WSAEEDASLAELVSRKGFKWALISSQLTGAFGIPRTGKQCRERWFNHV). The 55-residue stretch at 969–1023 (NPEVKKGDWSAEEDAMILMLQNELGNRWATIAKKLRGRTENAVKNRFISLSNARL) folds into the HTH myb-type domain. The segment at residues 996–1019 (WATIAKKLRGRTENAVKNRFISLS) is a DNA-binding region (H-T-H motif). Disordered stretches follow at residues 1027-1050 (RPKRDGSSADCFSNRRTGSGKSSG), 1098-1127 (VSRPRQCTGTSPSCGHPSAGEGDPSHLKNT), 1206-1270 (NDER…NGLD), 1319-1343 (PACDHRGAPQNSVESGEQSPDAQRQ), 1501-1521 (QLWTSQETESDTNPSPNQQHE), 1905-1932 (VSRDKQREPPKNGLTGCDVPEYLGTSQS), 1959-2013 (RVRW…GSTA), and 2161-2222 (GTDA…EMQD). Polar residues predominate over residues 1036-1050 (DCFSNRRTGSGKSSG). Basic and acidic residues predominate over residues 1227-1237 (AHEHADIARSD). Polar residues-rich tracts occupy residues 1327 to 1343 (PQNSVESGEQSPDAQRQ) and 1501 to 1520 (QLWTSQETESDTNPSPNQQH). Over residues 1974–1985 (SVSSGASNSATT) the composition is skewed to polar residues. Positions 2181–2197 (QAHRRDGHDMQRVQRCD) are enriched in basic and acidic residues.

It localises to the nucleus. Its function is as follows. Master transcription factor that controls the differentiation of acute-stage tachyzoite parasites into chronic-stage bradyzoites, which form intracellular cysts resistant to immune clearance and existing therapies. Sufficient to drive differentiation into bradyzoite stage. Following translation in response to stress conditions, binds to the promoter of many chronic stage-specific genes and promotes their expression, thereby driving differentiation into bradyzoites. In Toxoplasma gondii (strain ATCC 50611 / Me49), this protein is Bradyzoite-formation deficient protein 1.